A 654-amino-acid chain; its full sequence is MDLHTAVYNAAHDGKLLLLQKLLAGRGREEIEELLGEVAGGGTPLLIAARRGHLDVVEYLVDNCGASVEASGSVHFDGETIEGAPPLWAASAAGHLAVVRSLLRRGASVNRTTRTNSTPLRAACFDGHLDVVRYLVGEHKADLEVANRHGHTCLMISCYKGHREIARYLLERGAQVNRRSAKGNTALHDCAESGSLEILQLLLGCHARMERDGYGMTPLLAASVTGHTNIVEYLIQEQPGHGQLSGTELPGEGSSQMAGNHCSTPEEAEPYESCCPTSREAAVEALELLGATYVDKKRDLLGALKHWRRAMELRHQGGDYLPKPEPQQLVLAYDYSREVSTPQELEALITDPDEMRMQALLIRERILGPSHPDTSYYIRYRGAVYADSGNFERCIRLWKYALDMQQNNLEPLSPMTASSFLSFAELFSYVLQDRSAKGNLGMQLGFADLMGVLSKGVREVERALQLPKEPGDSAQFTKAIAIILHLLYLLEKVECTPSQEHLKHQTVYRLLKCAPRGKNGFTPLHMAVDKETTNVGRYRVGIFPSLQVVKVLLDCGADPDSRDFDNNTPLHVAAQNNCPAIMDALIEAGAHMDATNAFKKTAYELLDSKLLAKSTMQPFNYVTLQCLAARALDRNKVPYKGFIPEELEAFIQLH.

ANK repeat units lie at residues 2–31 (DLHTAVYNAAHDGKLLLLQKLLAGRGREEI), 40–70 (GGGTPLLIAARRGHLDVVEYLVDNCGASVEA), 82–111 (EGAPPLWAASAAGHLAVVRSLLRRGASVNR), 115–145 (TNSTPLRAACFDGHLDVVRYLVGEHKADLEV), 149–178 (HGHTCLMISCYKGHREIARYLLERGAQVNR), 182–211 (KGNTALHDCAESGSLEILQLLLGCHARMER), and 214–243 (YGMTPLLAASVTGHTNIVEYLIQEQPGHGQ). Phosphoserine is present on serine 108. A disordered region spans residues 241 to 265 (HGQLSGTELPGEGSSQMAGNHCSTP). Over residues 253 to 263 (GSSQMAGNHCS) the composition is skewed to polar residues. TPR repeat units follow at residues 283-317 (VEALELLGATYVDKKRDLLGALKHWRRAMELRHQG) and 375-408 (SYYIRYRGAVYADSGNFERCIRLWKYALDMQQNN). 2 ANK repeats span residues 519 to 561 (NGFT…DPDS) and 565 to 594 (DNNTPLHVAAQNNCPAIMDALIEAGAHMDA). At serine 608 the chain carries Phosphoserine.

The protein belongs to the fem-1 family. As to quaternary structure, component of a CRL2 E3 ubiquitin-protein ligase complex, also named ECS (Elongin BC-CUL2/5-SOCS-box protein) complex, composed of CUL2, Elongin BC (ELOB and ELOC), RBX1 and substrate-specific adapter FEM1A. Interacts with PTGER4. Interacts with NFKB1; the interaction is direct. Phosphorylated; highly phosphorylated in myoblasts and myotubes. Phosphorylation at Ser-108 and Ser-608 promote PGE2-EP4-mediated inhibition of inflammation. Dephosphorylated by protein phosphatase 2A (PP2A).

It localises to the mitochondrion. It is found in the cytoplasm. It functions in the pathway protein modification; protein ubiquitination. In terms of biological role, substrate-recognition component of a Cul2-RING (CRL2) E3 ubiquitin-protein ligase complex of the DesCEND (destruction via C-end degrons) pathway, which recognizes a C-degron located at the extreme C terminus of target proteins, leading to their ubiquitination and degradation. The C-degron recognized by the DesCEND pathway is usually a motif of less than ten residues and can be present in full-length proteins, truncated proteins or proteolytically cleaved forms. The CRL2(FEM1A) complex specifically recognizes proteins with an arginine at the C-terminus: recognizes and binds proteins ending with -Lys/Arg-Xaa-Arg and -Lys/Arg-Xaa-Xaa-Arg C-degrons, such as SIL1 or OR51B2, leading to their ubiquitination and degradation. Involved in PGE2-EP4-mediated inhibition of inflammation of macrophages via interaction with NFKB1 and PTGER4. Promotes inflammation in brain microglia through MAP2K4/MKK4-mediated signaling. The polypeptide is Protein fem-1 homolog A (Rattus norvegicus (Rat)).